Consider the following 427-residue polypeptide: Serine hydroxymethyltransferase (427 aa).

(6S)-5,6,7,8-tetrahydrofolate-binding positions include L122 and 126–128 (GHL). K231 bears the N6-(pyridoxal phosphate)lysine mark. Residues E247 and 355–357 (SPF) each bind (6S)-5,6,7,8-tetrahydrofolate.

Belongs to the SHMT family. Homodimer. Pyridoxal 5'-phosphate serves as cofactor.

Its subcellular location is the cytoplasm. The catalysed reaction is (6R)-5,10-methylene-5,6,7,8-tetrahydrofolate + glycine + H2O = (6S)-5,6,7,8-tetrahydrofolate + L-serine. The protein operates within one-carbon metabolism; tetrahydrofolate interconversion. It functions in the pathway amino-acid biosynthesis; glycine biosynthesis; glycine from L-serine: step 1/1. In terms of biological role, catalyzes the reversible interconversion of serine and glycine with tetrahydrofolate (THF) serving as the one-carbon carrier. This reaction serves as the major source of one-carbon groups required for the biosynthesis of purines, thymidylate, methionine, and other important biomolecules. Also exhibits THF-independent aldolase activity toward beta-hydroxyamino acids, producing glycine and aldehydes, via a retro-aldol mechanism. The protein is Serine hydroxymethyltransferase of Crocosphaera subtropica (strain ATCC 51142 / BH68) (Cyanothece sp. (strain ATCC 51142)).